A 222-amino-acid polypeptide reads, in one-letter code: Urease accessory protein UreF (222 aa).

This sequence belongs to the UreF family. UreD, UreF and UreG form a complex that acts as a GTP-hydrolysis-dependent molecular chaperone, activating the urease apoprotein by helping to assemble the nickel containing metallocenter of UreC. The UreE protein probably delivers the nickel.

The protein localises to the cytoplasm. Functionally, required for maturation of urease via the functional incorporation of the urease nickel metallocenter. The sequence is that of Urease accessory protein UreF from Hahella chejuensis (strain KCTC 2396).